A 483-amino-acid polypeptide reads, in one-letter code: MLTADSLNLILAISEGELVEEIVIALLASPQLAVFFEKFPRLKHALTQDIPRWREQLKTRLKEAHVPPELEEEVIGYQKSQLLSTSQFIVQLPQISALLRRVGSPFADQAQRLIADNPHFTPALHTLFLQRWRLSLVVQATSFNQQLLEEEREQLLSEVQERMTLSGQLEQVLVENEDSAGRLWDMSDGKLRRGDYQLIVKYGDFLADQPELMQLAEQLGRSREAKSVPKKEAPLETFRTLVREPASVPEQVDGLQRSDDILRLLPPELATLGITELEYEFYRRLVEKQLLTYRLQGDAWREKVMQRPVTRQDYDEQPRGPFIVCVDTSGSMGGFNEQCAKAFCLALMRIALADNRRCFIMLFSSEVVRYELCGRDGIEQAIRFLSQRFRGGTDLASCFRAIAEKLQGGEWFDADAVVVSDFIAQRLPDEVVNKVKELQRVHQHRFHAVAMSAHGKPGIMRIFDHIWRFDTGMRSRLVRRLRR.

This sequence belongs to the ViaA family. As to quaternary structure, homodimer. Interacts with RavA.

The protein resides in the cytoplasm. Functionally, component of the RavA-ViaA chaperone complex, which may act on the membrane to optimize the function of some of the respiratory chains. ViaA stimulates the ATPase activity of RavA. This chain is Regulatory protein ViaA, found in Cronobacter sakazakii (strain ATCC BAA-894) (Enterobacter sakazakii).